Here is a 272-residue protein sequence, read N- to C-terminus: Putative phosphoenolpyruvate synthase regulatory protein (272 aa).

152–159 (GVSRCGKT) contacts ADP.

Belongs to the pyruvate, phosphate/water dikinase regulatory protein family. PSRP subfamily.

It carries out the reaction [pyruvate, water dikinase] + ADP = [pyruvate, water dikinase]-phosphate + AMP + H(+). It catalyses the reaction [pyruvate, water dikinase]-phosphate + phosphate + H(+) = [pyruvate, water dikinase] + diphosphate. Functionally, bifunctional serine/threonine kinase and phosphorylase involved in the regulation of the phosphoenolpyruvate synthase (PEPS) by catalyzing its phosphorylation/dephosphorylation. In Pseudomonas putida (strain GB-1), this protein is Putative phosphoenolpyruvate synthase regulatory protein.